The sequence spans 565 residues: DNA primase (565 aa).

The CHC2-type zinc finger occupies 37 to 61 (CPFHSETNPSFYVHPGLKIYHCFGC). In terms of domain architecture, Toprim spans 248-329 (GFFVITEGYF…NVLVATPSPY (82 aa)). 3 residues coordinate Mg(2+): Glu-254, Asp-298, and Asp-300.

This sequence belongs to the DnaG primase family. In terms of assembly, monomer. Interacts with DnaB. Zn(2+) is required as a cofactor. The cofactor is Mg(2+).

It carries out the reaction ssDNA + n NTP = ssDNA/pppN(pN)n-1 hybrid + (n-1) diphosphate.. In terms of biological role, RNA polymerase that catalyzes the synthesis of short RNA molecules used as primers for DNA polymerase during DNA replication. The polypeptide is DNA primase (Thermotoga maritima (strain ATCC 43589 / DSM 3109 / JCM 10099 / NBRC 100826 / MSB8)).